A 224-amino-acid polypeptide reads, in one-letter code: MESGAYGAAKAGGSFDLRRFLTQPQVVARAVCLVFALIVFSCIYGEGYSNAHESKQMYCVFNRNEDACRYGSAIGVLAFLASAFFLVVDAYFPQISNATDRKYLVIGDLLFSALWTFLWFVGFCFLTNQWAVTNPKDVLVGADSVRAAITFSFFSIFSWGVLASLAYQRYKAGVDDFIQNYVDPTPDPNTAYASYPGASVDNYQQPPFTQNAETTEGYQPPPVY.

M1 is subject to N-acetylmethionine. Residue S3 is modified to Phosphoserine. One can recognise an MARVEL domain in the interval 20-171 (FLTQPQVVAR…LASLAYQRYK (152 aa)). 4 helical membrane-spanning segments follow: residues 26-46 (VVAR…IYGE), 73-93 (AIGV…AYFP), 105-125 (VIGD…GFCF), and 147-167 (AAIT…SLAY).

The protein belongs to the synaptogyrin family. (Microbial infection) Interacts with SFTS phlebovirus protein NSs; may be involved in virus replication. May be tyrosine phosphorylated by Src. Ubiquitous; low expression in brain.

Its subcellular location is the cytoplasmic vesicle membrane. The protein localises to the cytoplasmic vesicle. It localises to the secretory vesicle. The protein resides in the synaptic vesicle membrane. It is found in the lipid droplet. Functionally, may play a role in regulated exocytosis. In neuronal cells, modulates the localization of synaptophysin/SYP into synaptic-like microvesicles and may therefore play a role in the formation and/or the maturation of this vesicles. May also play a role in GLUT4 storage and transport to the plasma membrane. In terms of biological role, (Microbial infection) May play a role in the assembly of cytoplasmic inclusion bodies required for SFTS phlebovirus replication. The chain is Synaptogyrin-2 from Homo sapiens (Human).